We begin with the raw amino-acid sequence, 609 residues long: MRPLSRSISRLAAVAMGDRKADLIIQNCSLVSVYTGEVIEGTEIAVSGDRIAYVGPDASHARGAGTVIHNAQGRYAAPGFADPHIHVDQFVTPAELAAQSVLHGTTSLFSDPIDMVGVAGYRGFRTLMNMSKDLPARFFHVVPGGLPVDGRFSHSNTLSPEEERSAIGLPDVLGMGEVFSWTKVTSRDPGTMRSIGTMLDGGCIINGHTAGASGKKLSAYVSAGILSCHEPVNAEQAEERLRLGMWVMMREGSIRRDLAEILPPMLKKEAGLDRLMFCTDGIDPVDMGEKGHIDHCVREAVRLGADPVRAIAMASRNCFDYYNMARDLGGISPGRIADIQMLYDLESFRPEDVFVGGNRMVSGGKLVSRQHPVKAPSWTRRTIRLGRLTAADFAVHSRKKTEQVNTITMKTEIITEQGSAELSVKEGNVEPSRDSDVWKVAAFDRLSGNGGRTVGFLENFGADIGALASSWSFHENDLVVLGSSEIEMAKAANAVMDKGGGIAVVQKGRVSAMLPLQICGIISSDPFGKVSEGLSKLTSVMTDAGCTFQRPHLVPVFLPFLALPSVRILYSGMVDVRRRSYIPVIAGARTASQRPKTLRNIKKGPKSVR.

This sequence belongs to the metallo-dependent hydrolases superfamily. Adenine deaminase family. It depends on Mn(2+) as a cofactor.

It carries out the reaction adenine + H2O + H(+) = hypoxanthine + NH4(+). The polypeptide is Adenine deaminase (Cenarchaeum symbiosum (strain A)).